We begin with the raw amino-acid sequence, 165 residues long: Phosphopantetheine adenylyltransferase (165 aa).

Residue Thr9 participates in substrate binding. Residues 9–10 and His17 contribute to the ATP site; that span reads TF. Residues Lys41, Leu73, and Arg87 each coordinate substrate. ATP-binding positions include 88–90, Glu98, and 123–129; these read GLR and YQFISGT.

The protein belongs to the bacterial CoaD family. In terms of assembly, homohexamer. Mg(2+) is required as a cofactor.

The protein localises to the cytoplasm. It carries out the reaction (R)-4'-phosphopantetheine + ATP + H(+) = 3'-dephospho-CoA + diphosphate. It participates in cofactor biosynthesis; coenzyme A biosynthesis; CoA from (R)-pantothenate: step 4/5. Functionally, reversibly transfers an adenylyl group from ATP to 4'-phosphopantetheine, yielding dephospho-CoA (dPCoA) and pyrophosphate. The polypeptide is Phosphopantetheine adenylyltransferase (Burkholderia vietnamiensis (strain G4 / LMG 22486) (Burkholderia cepacia (strain R1808))).